A 567-amino-acid polypeptide reads, in one-letter code: Hexose transporter HXT15 (567 aa).

The segment covering 1 to 19 (MASEQSSPEINADNLNSSA) has biased composition (polar residues). Residues 1 to 32 (MASEQSSPEINADNLNSSAADVHVQPPGEKEW) form a disordered region. Residues 1–55 (MASEQSSPEINADNLNSSAADVHVQPPGEKEWSDGFYDKEVINGNTPDAPKRGFL) lie on the Cytoplasmic side of the membrane. Residues 56–76 (GYLIIYLLCYPVSFGGFLPGW) form a helical membrane-spanning segment. Over 77-112 (DSGITAGFINMDNFKMNFGSYKHSTGEYYLSNVRMG) the chain is Extracellular. A helical membrane pass occupies residues 113–133 (LLVAMFSVGCSIGGVAFARLA). The Cytoplasmic portion of the chain corresponds to 134 to 139 (DTLGRR). A helical transmembrane segment spans residues 140–160 (LAIVIVVLVYMVGAIIQISSN). At 161-170 (HKWYQYFVGK) the chain is on the extracellular side. A helical membrane pass occupies residues 171–191 (IIYGLGAGGCSVLCPMLLSEI). Residues 192 to 197 (APTDLR) lie on the Cytoplasmic side of the membrane. The helical transmembrane segment at 198–218 (GGLVSLYQLNMTFGIFLGYCS) threads the bilayer. Topologically, residues 219-232 (VYGTRKYSNTAQWR) are extracellular. The chain crosses the membrane as a helical span at residues 233-253 (IPVGLCFLWALIIIVGMLLVP). The Cytoplasmic segment spans residues 254–336 (ESPRYLIECE…VQTFLQLTGE (83 aa)). A helical transmembrane segment spans residues 337-353 (NYFFFYGTTIFKSVGLT). The Extracellular portion of the chain corresponds to 354–359 (DGFETS). Residues 360 to 377 (IVLGTVNFFSTIIAVMVV) traverse the membrane as a helical segment. The Cytoplasmic segment spans residues 378-384 (DKIGRRK). Residues 385–405 (CLLFGAASMMACMVIFASIGV) traverse the membrane as a helical segment. Topologically, residues 406–427 (KCLYPHGQDGPSSKGAGNAMIV) are extracellular. The chain crosses the membrane as a helical span at residues 428–448 (FTCFYIFCFATTWAPVAYIVV). The Cytoplasmic segment spans residues 449 to 465 (AESFPSKVKSKAMSIST). Residues 466–486 (AFNWLWQFLIGFFTPFITGSI) form a helical membrane-spanning segment. Position 487 (H487) is a topological domain, extracellular. Residues 488–508 (FYYGYVFVGCLVAMFLYVFFF) form a helical membrane-spanning segment. Topologically, residues 509–567 (LPETIGLSLEEIQLLYEEGIKPWKSASWVPPSRRGASSRETEAKKKSWKEVLKFPKSFN) are cytoplasmic. The tract at residues 533 to 555 (SASWVPPSRRGASSRETEAKKKS) is disordered. Residues 545–555 (SSRETEAKKKS) show a composition bias toward basic and acidic residues.

Belongs to the major facilitator superfamily. Sugar transporter (TC 2.A.1.1) family.

It is found in the membrane. In terms of biological role, probable glucose transporter. This Saccharomyces cerevisiae (strain ATCC 204508 / S288c) (Baker's yeast) protein is Hexose transporter HXT15 (HXT15).